The sequence spans 698 residues: Polyribonucleotide nucleotidyltransferase (698 aa).

Residues Asp-490 and Asp-496 each contribute to the Mg(2+) site. In terms of domain architecture, KH spans Pro-557–Ile-616. The 69-residue stretch at Gly-626–Arg-694 folds into the S1 motif domain.

It belongs to the polyribonucleotide nucleotidyltransferase family. Mg(2+) serves as cofactor.

It localises to the cytoplasm. It carries out the reaction RNA(n+1) + phosphate = RNA(n) + a ribonucleoside 5'-diphosphate. In terms of biological role, involved in mRNA degradation. Catalyzes the phosphorolysis of single-stranded polyribonucleotides processively in the 3'- to 5'-direction. The chain is Polyribonucleotide nucleotidyltransferase from Staphylococcus aureus (strain Mu3 / ATCC 700698).